A 502-amino-acid polypeptide reads, in one-letter code: Probable glycerol kinase (502 aa).

A substrate-binding site is contributed by Thr-11. Arg-15 serves as a coordination point for ATP. Positions 85, 140, and 246 each coordinate substrate. Residues Thr-268, Gly-313, and 416-420 (GMIAN) contribute to the ATP site.

Belongs to the FGGY kinase family.

The enzyme catalyses glycerol + ATP = sn-glycerol 3-phosphate + ADP + H(+). It functions in the pathway polyol metabolism; glycerol degradation via glycerol kinase pathway; sn-glycerol 3-phosphate from glycerol: step 1/1. The protein is Probable glycerol kinase of Caenorhabditis elegans.